We begin with the raw amino-acid sequence, 244 residues long: Phosphoadenosine 5'-phosphosulfate reductase (244 aa).

Cys-239 serves as the catalytic Nucleophile; cysteine thiosulfonate intermediate.

The protein belongs to the PAPS reductase family. CysH subfamily.

It localises to the cytoplasm. It catalyses the reaction [thioredoxin]-disulfide + sulfite + adenosine 3',5'-bisphosphate + 2 H(+) = [thioredoxin]-dithiol + 3'-phosphoadenylyl sulfate. The protein operates within sulfur metabolism; hydrogen sulfide biosynthesis; sulfite from sulfate: step 3/3. In terms of biological role, catalyzes the formation of sulfite from phosphoadenosine 5'-phosphosulfate (PAPS) using thioredoxin as an electron donor. This is Phosphoadenosine 5'-phosphosulfate reductase from Sodalis glossinidius (strain morsitans).